We begin with the raw amino-acid sequence, 328 residues long: Malate dehydrogenase (328 aa).

11 to 17 (GAAGQIG) contacts NAD(+). Positions 94 and 100 each coordinate substrate. NAD(+)-binding positions include asparagine 107, glutamine 114, and 131–133 (VGN). Positions 133 and 164 each coordinate substrate. Residue histidine 189 is the Proton acceptor of the active site.

The protein belongs to the LDH/MDH superfamily. MDH type 2 family.

The enzyme catalyses (S)-malate + NAD(+) = oxaloacetate + NADH + H(+). Its function is as follows. Catalyzes the reversible oxidation of malate to oxaloacetate. This chain is Malate dehydrogenase, found in Xylella fastidiosa (strain M23).